The following is a 617-amino-acid chain: Estrogen receptor (617 aa).

The interval 1 to 54 (MSEEQARAEAPAGARQRRRSELEGYSVSLASLKLSPMYPEEEQRTTGGISSTAH) is disordered. A modulating region spans residues 1-186 (MSEEQARAEA…AIGLVKEIRY (186 aa)). NR C4-type zinc fingers lie at residues 187 to 207 (CSVCSDYASGYHYGVWSCEGC) and 223 to 247 (CPATNQCTIDRNRRKSCQACRLRKC). The segment at residues 187 to 252 (CSVCSDYASG…RLRKCYEVGM (66 aa)) is a DNA-binding region (nuclear receptor). The segment at 253–315 (MKGGFRKERG…GGGVADVVCM (63 aa)) is hinge. The segment at 269–303 (NRRPSGLKERERGYSKAQSGSDVREALPQDGQSSS) is disordered. In terms of domain architecture, NR LBD spans 316-552 (SPEQVLLLLL…DLLLEMLDAH (237 aa)). The tract at residues 568 to 617 (VSSSPTTTATTPTTNTTTTTTTTTHHPSNGSTCPADLPSNPPGPGQSPSP) is disordered. Residues 573-591 (TTTATTPTTNTTTTTTTTT) show a composition bias toward low complexity. Over residues 606 to 617 (SNPPGPGQSPSP) the composition is skewed to pro residues.

The protein belongs to the nuclear hormone receptor family. NR3 subfamily. As to quaternary structure, binds DNA as a homodimer. Can form a heterodimer with ER-beta. Ovary and testis.

Its subcellular location is the nucleus. In terms of biological role, the steroid hormones and their receptors are involved in the regulation of eukaryotic gene expression and affect cellular proliferation and differentiation in target tissues. This Ictalurus punctatus (Channel catfish) protein is Estrogen receptor (esr1).